Reading from the N-terminus, the 89-residue chain is Large ribosomal subunit protein bL27 (89 aa).

A disordered region spans residues M1–G22. Polar residues predominate over residues A7 to Q19.

The protein belongs to the bacterial ribosomal protein bL27 family.

The chain is Large ribosomal subunit protein bL27 from Cutibacterium acnes (strain DSM 16379 / KPA171202) (Propionibacterium acnes).